A 286-amino-acid chain; its full sequence is NAD kinase (286 aa).

Catalysis depends on D74, which acts as the Proton acceptor. NAD(+)-binding positions include 74 to 75 (DG), 148 to 149 (ND), D178, A186, 189 to 194 (TAYNLS), and Q244.

This sequence belongs to the NAD kinase family. A divalent metal cation is required as a cofactor.

The protein resides in the cytoplasm. The enzyme catalyses NAD(+) + ATP = ADP + NADP(+) + H(+). In terms of biological role, involved in the regulation of the intracellular balance of NAD and NADP, and is a key enzyme in the biosynthesis of NADP. Catalyzes specifically the phosphorylation on 2'-hydroxyl of the adenosine moiety of NAD to yield NADP. The chain is NAD kinase from Campylobacter jejuni subsp. jejuni serotype O:23/36 (strain 81-176).